A 79-amino-acid chain; its full sequence is uncharacterized protein (79 aa).

This is an uncharacterized protein from Haemophilus influenzae (strain ATCC 51907 / DSM 11121 / KW20 / Rd).